The primary structure comprises 253 residues: Ubiquinone/menaquinone biosynthesis C-methyltransferase UbiE (253 aa).

S-adenosyl-L-methionine is bound by residues Thr76, Asp97, and 125 to 126 (NA).

This sequence belongs to the class I-like SAM-binding methyltransferase superfamily. MenG/UbiE family.

The catalysed reaction is a 2-demethylmenaquinol + S-adenosyl-L-methionine = a menaquinol + S-adenosyl-L-homocysteine + H(+). The enzyme catalyses a 2-methoxy-6-(all-trans-polyprenyl)benzene-1,4-diol + S-adenosyl-L-methionine = a 5-methoxy-2-methyl-3-(all-trans-polyprenyl)benzene-1,4-diol + S-adenosyl-L-homocysteine + H(+). It participates in quinol/quinone metabolism; menaquinone biosynthesis; menaquinol from 1,4-dihydroxy-2-naphthoate: step 2/2. Its pathway is cofactor biosynthesis; ubiquinone biosynthesis. Methyltransferase required for the conversion of demethylmenaquinol (DMKH2) to menaquinol (MKH2) and the conversion of 2-polyprenyl-6-methoxy-1,4-benzoquinol (DDMQH2) to 2-polyprenyl-3-methyl-6-methoxy-1,4-benzoquinol (DMQH2). This Nitrobacter hamburgensis (strain DSM 10229 / NCIMB 13809 / X14) protein is Ubiquinone/menaquinone biosynthesis C-methyltransferase UbiE.